The sequence spans 640 residues: Acid beta-fructofuranosidase 2, vacuolar (640 aa).

Positions 1–22 (MDTNTTSYTPLPGDPFLSGPPE) are disordered. Over 1-29 (MDTNTTSYTPLPGDPFLSGPPETPRRPLK) the chain is Cytoplasmic. A propeptide spans 1–78 (MDTNTTSYTP…HPQSTTNTML (78 aa)) (removed in mature form). The chain crosses the membrane as a helical span at residues 30 to 49 (GFAVIFASVIFLMSLVALII). Over 50 to 616 (HQGPQQPPDV…FSPDAASHSS (567 aa)) the chain is Lumenal. Residues 93–96 (WMND), glutamine 112, tryptophan 120, 155–156 (WT), 219–220 (RD), glutamate 274, and aspartate 307 each bind substrate. The active site involves aspartate 96. Cysteine 464 and cysteine 512 form a disulfide bridge. Residues 617–639 (FTPVTVFIKFIVPFGIFLTLYFV) form a helical membrane-spanning segment. A topological domain (cytoplasmic) is located at residue arginine 640.

It belongs to the glycosyl hydrolase 32 family. As to expression, expressed in buds, stems, roots and leaves.

Its subcellular location is the membrane. The protein resides in the vacuole membrane. It catalyses the reaction Hydrolysis of terminal non-reducing beta-D-fructofuranoside residues in beta-D-fructofuranosides.. Its function is as follows. Vacuolar invertase. The sequence is that of Acid beta-fructofuranosidase 2, vacuolar from Rosa hybrid cultivar.